An 88-amino-acid chain; its full sequence is DNA-directed RNA polymerase subunit omega (88 aa).

It belongs to the RNA polymerase subunit omega family. As to quaternary structure, the RNAP catalytic core consists of 2 alpha, 1 beta, 1 beta' and 1 omega subunit. When a sigma factor is associated with the core the holoenzyme is formed, which can initiate transcription.

It carries out the reaction RNA(n) + a ribonucleoside 5'-triphosphate = RNA(n+1) + diphosphate. Promotes RNA polymerase assembly. Latches the N- and C-terminal regions of the beta' subunit thereby facilitating its interaction with the beta and alpha subunits. In Anaeromyxobacter sp. (strain Fw109-5), this protein is DNA-directed RNA polymerase subunit omega.